A 291-amino-acid chain; its full sequence is NAD kinase (291 aa).

The active-site Proton acceptor is the aspartate 73. NAD(+)-binding positions include 73-74, 147-148, arginine 175, aspartate 177, and glutamine 246; these read DG and ND.

It belongs to the NAD kinase family. Requires a divalent metal cation as cofactor.

The protein localises to the cytoplasm. The enzyme catalyses NAD(+) + ATP = ADP + NADP(+) + H(+). Involved in the regulation of the intracellular balance of NAD and NADP, and is a key enzyme in the biosynthesis of NADP. Catalyzes specifically the phosphorylation on 2'-hydroxyl of the adenosine moiety of NAD to yield NADP. This is NAD kinase from Laribacter hongkongensis (strain HLHK9).